The sequence spans 415 residues: L-cysteine:1D-myo-inositol 2-amino-2-deoxy-alpha-D-glucopyranoside ligase (415 aa).

A Zn(2+)-binding site is contributed by cysteine 43. L-cysteinyl-5'-AMP is bound by residues 43-46, threonine 58, and 81-83; these read CGIT and NVT. Positions 45 to 55 match the 'HIGH' region motif; it reads ITPYDATHLGH. Residues 187–192 carry the 'ERGGDP' region motif; that stretch reads ERGGDP. Tryptophan 227 provides a ligand contact to L-cysteinyl-5'-AMP. Cysteine 231 is a Zn(2+) binding site. L-cysteinyl-5'-AMP is bound at residue 249–251; it reads GSD. Residue histidine 256 coordinates Zn(2+). Residue isoleucine 283 coordinates L-cysteinyl-5'-AMP. The 'KMSKS' region signature appears at 289–293; sequence KMSKS.

Belongs to the class-I aminoacyl-tRNA synthetase family. MshC subfamily. Monomer. It depends on Zn(2+) as a cofactor.

It catalyses the reaction 1D-myo-inositol 2-amino-2-deoxy-alpha-D-glucopyranoside + L-cysteine + ATP = 1D-myo-inositol 2-(L-cysteinylamino)-2-deoxy-alpha-D-glucopyranoside + AMP + diphosphate + H(+). Its function is as follows. Catalyzes the ATP-dependent condensation of GlcN-Ins and L-cysteine to form L-Cys-GlcN-Ins. This is L-cysteine:1D-myo-inositol 2-amino-2-deoxy-alpha-D-glucopyranoside ligase from Saccharomonospora viridis (strain ATCC 15386 / DSM 43017 / JCM 3036 / CCUG 5913 / NBRC 12207 / NCIMB 9602 / P101) (Thermoactinomyces viridis).